Reading from the N-terminus, the 530-residue chain is MARLFTPSESKYYLMALDAGTGSIRAVIFDLEGNQIAVGQAEWRHLAVPDVPGSMEFDLNKNWQLACECMRQALHNAGIAPEYIAAVSACSMREGIVLYNNEGTPIWACANVDARAAREVSELKELHNNTFENEVYRATGQTLALSAIPRLLWLAHHRSDIYRQASTITMISDWLAYMLSGELAVDPSNAGTTGLLDLTTRDWKPALLDMAGLRADILSPVKETGTLLGVVSSQAAELCGLKAGTPVVVGGGDVQLGCLGLGVVRPAQTAVLGGTFWQQVVNLAAPVTDPEMNVRVNPHVIPGMVQAESISFFTGLTMRWFRDAFCAEEKLIAERLGIDTYTLLEEMTSRVPPGSWGVMPIFSDRMRFKTWYHAAPSFINLSIDPDKCNKATLFRALEENAAIVSACNLQQIADFSNIHPSSLVFAGGGSKGKLWSQILADVSGLPVNIPVVKEATALGCAIAAGVGAGIFSSMAETGERLVRWERTHTPAPEKHELYQDSRDKWQAVYQDQLGLVDHGLTTSLWKAPGL.

Belongs to the FGGY kinase family.

The protein localises to the cytoplasm. The enzyme catalyses (S)-4,5-dihydroxypentane-2,3-dione + ATP = (2S)-2-hydroxy-3,4-dioxopentyl phosphate + ADP + H(+). Its function is as follows. Catalyzes the phosphorylation of autoinducer-2 (AI-2) to phospho-AI-2, which subsequently inactivates the transcriptional regulator LsrR and leads to the transcription of the lsr operon. Phosphorylates the ring-open form of (S)-4,5-dihydroxypentane-2,3-dione (DPD), which is the precursor to all AI-2 signaling molecules, at the C5 position. The chain is Autoinducer-2 kinase from Escherichia coli O9:H4 (strain HS).